Reading from the N-terminus, the 365-residue chain is Ribosomal RNA large subunit methyltransferase M (365 aa).

S-adenosyl-L-methionine-binding positions include serine 194, cysteine 227–glycine 230, aspartate 246, aspartate 266, and aspartate 284. Catalysis depends on lysine 313, which acts as the Proton acceptor.

This sequence belongs to the class I-like SAM-binding methyltransferase superfamily. RNA methyltransferase RlmE family. RlmM subfamily. As to quaternary structure, monomer.

It localises to the cytoplasm. It catalyses the reaction cytidine(2498) in 23S rRNA + S-adenosyl-L-methionine = 2'-O-methylcytidine(2498) in 23S rRNA + S-adenosyl-L-homocysteine + H(+). Catalyzes the 2'-O-methylation at nucleotide C2498 in 23S rRNA. This chain is Ribosomal RNA large subunit methyltransferase M, found in Pasteurella multocida (strain Pm70).